The chain runs to 269 residues: Eukaryotic translation initiation factor 3 subunit G-1 (269 aa).

One can recognise an RRM domain in the interval 188-266; that stretch reads AAIRISNLSE…LILSVEWSKP (79 aa).

This sequence belongs to the eIF-3 subunit G family. Component of the eukaryotic translation initiation factor 3 (eIF-3) complex. The eIF-3 complex interacts with pix.

The protein localises to the cytoplasm. Its function is as follows. RNA-binding component of the eukaryotic translation initiation factor 3 (eIF-3) complex, which is involved in protein synthesis of a specialized repertoire of mRNAs and, together with other initiation factors, stimulates binding of mRNA and methionyl-tRNAi to the 40S ribosome. The eIF-3 complex specifically targets and initiates translation of a subset of mRNAs involved in cell proliferation. This subunit can bind 18S rRNA. The polypeptide is Eukaryotic translation initiation factor 3 subunit G-1 (Drosophila persimilis (Fruit fly)).